Reading from the N-terminus, the 341-residue chain is tRNA N6-adenosine threonylcarbamoyltransferase (341 aa).

The Fe cation site is built by H116 and H120. Substrate contacts are provided by residues 139 to 143, D172, G185, and N274; that span reads LVSGG. Residue D302 coordinates Fe cation.

The protein belongs to the KAE1 / TsaD family. It depends on Fe(2+) as a cofactor.

It is found in the cytoplasm. The enzyme catalyses L-threonylcarbamoyladenylate + adenosine(37) in tRNA = N(6)-L-threonylcarbamoyladenosine(37) in tRNA + AMP + H(+). In terms of biological role, required for the formation of a threonylcarbamoyl group on adenosine at position 37 (t(6)A37) in tRNAs that read codons beginning with adenine. Is involved in the transfer of the threonylcarbamoyl moiety of threonylcarbamoyl-AMP (TC-AMP) to the N6 group of A37, together with TsaE and TsaB. TsaD likely plays a direct catalytic role in this reaction. The polypeptide is tRNA N6-adenosine threonylcarbamoyltransferase (Vesicomyosocius okutanii subsp. Calyptogena okutanii (strain HA)).